The sequence spans 222 residues: MDSPFVLVNLKTYQEGMGSNAHRIAAAAETVAKESGAVIGIAPAFTELHPMSHHYAIPVYAQHIDAITPGAHTGHILPEAVRSAGARGTLINHSERRLTLADIGACVESARRLHLETVVCTNNDATSAAAAALRPDYVAIEPPELIGSGVSVSKADPGIIERSVNAVRAVNPDVNVLTGAGIQSGECVKIAVDLGTCGVLLASSVVKADDPEAVLRDLVSLL.

Position 9 to 11 (9 to 11 (NLK)) interacts with substrate. Residue His-93 is the Electrophile of the active site. Glu-141 acts as the Proton acceptor in catalysis. Substrate contacts are provided by residues Ile-146, Gly-181, and 202 to 203 (AS).

Belongs to the triosephosphate isomerase family. In terms of assembly, homotetramer; dimer of dimers.

It is found in the cytoplasm. The enzyme catalyses D-glyceraldehyde 3-phosphate = dihydroxyacetone phosphate. It participates in carbohydrate biosynthesis; gluconeogenesis. Its pathway is carbohydrate degradation; glycolysis; D-glyceraldehyde 3-phosphate from glycerone phosphate: step 1/1. Its function is as follows. Involved in the gluconeogenesis. Catalyzes stereospecifically the conversion of dihydroxyacetone phosphate (DHAP) to D-glyceraldehyde-3-phosphate (G3P). The polypeptide is Triosephosphate isomerase (Methanoculleus marisnigri (strain ATCC 35101 / DSM 1498 / JR1)).